Consider the following 218-residue polypeptide: Peroxynitrite isomerase 2 (218 aa).

The tract at residues 1–24 (MTPAGDTPERGSGDRAVAEAAERA) is disordered. Residues 7–24 (TPERGSGDRAVAEAAERA) show a composition bias toward basic and acidic residues. The short motif at 65 to 71 (GVWRGEG) is the GXWXGXG element. Heme b is bound by residues Lys181 and His208.

The protein belongs to the nitrobindin family. Homodimer. The cofactor is heme b.

It catalyses the reaction peroxynitrite = nitrate. Its pathway is nitrogen metabolism. Its function is as follows. Heme-binding protein able to scavenge peroxynitrite and to protect free L-tyrosine against peroxynitrite-mediated nitration, by acting as a peroxynitrite isomerase that converts peroxynitrite to nitrate. Therefore, this protein likely plays a role in peroxynitrite sensing and in the detoxification of reactive nitrogen and oxygen species (RNS and ROS, respectively). Is able to bind nitric oxide (NO) in vitro, but may act as a sensor of peroxynitrite levels in vivo. The sequence is that of Peroxynitrite isomerase 2 from Mycolicibacterium smegmatis (strain ATCC 700084 / mc(2)155) (Mycobacterium smegmatis).